We begin with the raw amino-acid sequence, 808 residues long: Putative dimethyl sulfoxide reductase chain YnfE (808 aa).

A signal peptide (tat-type signal) is located at residues 1–43 (MSKNERMVGISRRTLVKSTAIGSLALAAGGFSLPFTLRNAAAA). The 4Fe-4S Mo/W bis-MGD-type domain occupies 49–110 (EKVVWGACSV…SIRRRINHPD (62 aa)). Residues Cys56, Cys60, Cys64, and Cys96 each coordinate [4Fe-4S] cluster. A Mo-bis(molybdopterin guanine dinucleotide)-binding site is contributed by Ser196.

The protein belongs to the prokaryotic molybdopterin-containing oxidoreductase family. [4Fe-4S] cluster serves as cofactor. Mo-bis(molybdopterin guanine dinucleotide) is required as a cofactor. In terms of processing, exported by the Tat system. The position of the signal peptide cleavage has not been experimentally proven.

The protein resides in the cell membrane. In terms of biological role, terminal reductase during anaerobic growth on various sulfoxide and N-oxide compounds. In Escherichia coli (strain K12), this protein is Putative dimethyl sulfoxide reductase chain YnfE (ynfE).